The primary structure comprises 309 residues: Zinc transporter ZIP2 (309 aa).

Over 1–8 (MEQLLGIK) the chain is Extracellular. Residues 9–29 (LGCLFALLALTLGCGLTPICF) traverse the membrane as a helical segment. Residues 30–46 (KWFQIDAARGHHRLVLR) are Cytoplasmic-facing. A helical transmembrane segment spans residues 47–67 (LLGCISAGVFLGAGFMHMTAE). Residues 68-103 (ALEEIESQIQKFMVQNRSASERNSSGDADSAHMEYP) lie on the Extracellular side of the membrane. Residues 104–124 (YGELIISLGFFFVFFLESLAL) traverse the membrane as a helical segment. Over 125–164 (QCCPGAAGGSTVQDEEWGGAHIFELHSHGHLPSPSKGPLR) the chain is Cytoplasmic. The chain crosses the membrane as a helical span at residues 165–185 (ALVLLLSLSFHSVFEGLAVGL). Histidine 175 and glutamate 179 together coordinate Zn(2+). Residues 186–189 (QPTV) are Extracellular-facing. The chain crosses the membrane as a helical span at residues 190–210 (AATVQLCLAVLAHKGLVVFGV). Histidine 202 is a Zn(2+) binding site. Over 211 to 224 (GMRLVHLGTSSRWA) the chain is Cytoplasmic. A helical membrane pass occupies residues 225–245 (VFSILLLALMSPLGLAVGLAV). The Extracellular portion of the chain corresponds to 246-258 (TGGDSEGGRGLAQ). Residues 259–279 (AVLEGVAAGTFLYVTFLEILP) traverse the membrane as a helical segment. Glutamate 276 lines the Zn(2+) pocket. At 280–288 (RELASPEAP) the chain is on the cytoplasmic side. Residues 289-309 (LAKWSCVAAGFAFMAFIALWA) traverse the membrane as a helical segment.

It belongs to the ZIP transporter (TC 2.A.5) family. In terms of tissue distribution, expressed only in prostate and uterine epithelial cells.

The protein resides in the cell membrane. The enzyme catalyses Zn(2+)(in) = Zn(2+)(out). It catalyses the reaction Cd(2+)(in) = Cd(2+)(out). Activity is increased at acidic pH (6.5). Inhibited in the presence of high extracellular K(+). In terms of biological role, transporter for the divalent cation Zn(2+). Mediates the influx of Zn(2+) into cells from extracellular space. The Zn(2+) uniporter activity is independent of H(+)-driving force, but is modulated by extracellular pH and membrane potential. Also transports other divalent cations Zn(2+), Cd2(+), Cu2(+), Co2(+) in the order of decreasing affinity, respectively. In the skin, aids in the differentiation of keratinocytes in the epidermis. The protein is Zinc transporter ZIP2 of Homo sapiens (Human).